Here is a 229-residue protein sequence, read N- to C-terminus: Ribonuclease HII (229 aa).

Residues 34 to 225 (GPVAGVDEAG…VKAAHDQWLQ (192 aa)) form the RNase H type-2 domain. A divalent metal cation-binding residues include aspartate 40, glutamate 41, and aspartate 134.

The protein belongs to the RNase HII family. Mn(2+) serves as cofactor. Mg(2+) is required as a cofactor.

It localises to the cytoplasm. The catalysed reaction is Endonucleolytic cleavage to 5'-phosphomonoester.. Functionally, endonuclease that specifically degrades the RNA of RNA-DNA hybrids. In Corynebacterium diphtheriae (strain ATCC 700971 / NCTC 13129 / Biotype gravis), this protein is Ribonuclease HII.